A 462-amino-acid chain; its full sequence is G-patch domain and KOW motifs-containing protein homolog 1 (462 aa).

Disordered stretches follow at residues 1–26 and 182–218; these read MVEQ…KREE and LKLP…EEEK. A G-patch domain is found at 154–202; the sequence is IESFGLAILRGCNWKDGDGIGKNPQKVALKLPNRRPPGLGLGATPKNPV. Residues 221–248 form the KOW 1 domain; the sequence is EIKVGSFIKVVDGRNKGVYGKVEGRDDD. A compositionally biased stretch (basic and acidic residues) spans 289 to 305; it reads EYDKEKDRLETERKKLE. A disordered region spans residues 289–337; it reads EYDKEKDRLETERKKLESQPPSTSTSQSSKDYKSKSSSSKHDKNSSEYE. The segment covering 306–317 has biased composition (low complexity); the sequence is SQPPSTSTSQSS. Over residues 318 to 337 the composition is skewed to basic and acidic residues; it reads KDYKSKSSSSKHDKNSSEYE. Residues 401–428 enclose the KOW 2 domain; the sequence is PREIGEKLMIVAGKRSGQLAVMLDKDKR.

This sequence belongs to the MOS2 family.

It is found in the nucleus. The chain is G-patch domain and KOW motifs-containing protein homolog 1 from Caenorhabditis elegans.